Consider the following 180-residue polypeptide: Adenine phosphoribosyltransferase (180 aa).

The protein belongs to the purine/pyrimidine phosphoribosyltransferase family. Homodimer.

It localises to the cytoplasm. The enzyme catalyses AMP + diphosphate = 5-phospho-alpha-D-ribose 1-diphosphate + adenine. It functions in the pathway purine metabolism; AMP biosynthesis via salvage pathway; AMP from adenine: step 1/1. Its function is as follows. Catalyzes a salvage reaction resulting in the formation of AMP, that is energically less costly than de novo synthesis. In Agrobacterium fabrum (strain C58 / ATCC 33970) (Agrobacterium tumefaciens (strain C58)), this protein is Adenine phosphoribosyltransferase.